The sequence spans 225 residues: Orotate phosphoribosyltransferase (225 aa).

Lys-31 lines the 5-phospho-alpha-D-ribose 1-diphosphate pocket. Residue 39 to 40 participates in orotate binding; it reads FF. 5-phospho-alpha-D-ribose 1-diphosphate is bound by residues 78-79, Arg-105, Lys-106, Lys-109, His-111, and 130-138; these read YK and DDVLTSGKA. The orotate site is built by Thr-134 and Arg-163.

It belongs to the purine/pyrimidine phosphoribosyltransferase family. PyrE subfamily. In terms of assembly, homodimer.

The catalysed reaction is orotidine 5'-phosphate + diphosphate = orotate + 5-phospho-alpha-D-ribose 1-diphosphate. The protein operates within pyrimidine metabolism; UMP biosynthesis via de novo pathway; UMP from orotate: step 1/2. Functionally, catalyzes the transfer of a ribosyl phosphate group from 5-phosphoribose 1-diphosphate to orotate, leading to the formation of orotidine monophosphate (OMP). The protein is Orotate phosphoribosyltransferase (URA5) of Cryptococcus neoformans var. neoformans serotype D (strain B-3501A) (Filobasidiella neoformans).